Reading from the N-terminus, the 282-residue chain is Proteasome subunit beta (282 aa).

Residues 1 to 55 (MDNSSTGRYPAASLPPAYLRPGSSSFTDFLRAQAPELLPTARSFPEGSVVQAAHG) constitute a propeptide, removed in mature form; by autocatalysis. The active-site Nucleophile is the T56.

It belongs to the peptidase T1B family. In terms of assembly, the 20S proteasome core is composed of 14 alpha and 14 beta subunits that assemble into four stacked heptameric rings, resulting in a barrel-shaped structure. The two inner rings, each composed of seven catalytic beta subunits, are sandwiched by two outer rings, each composed of seven alpha subunits. The catalytic chamber with the active sites is on the inside of the barrel. Has a gated structure, the ends of the cylinder being occluded by the N-termini of the alpha-subunits. Is capped by the proteasome-associated ATPase, ARC.

It is found in the cytoplasm. The catalysed reaction is Cleavage of peptide bonds with very broad specificity.. The protein operates within protein degradation; proteasomal Pup-dependent pathway. The formation of the proteasomal ATPase ARC-20S proteasome complex, likely via the docking of the C-termini of ARC into the intersubunit pockets in the alpha-rings, may trigger opening of the gate for substrate entry. Interconversion between the open-gate and close-gate conformations leads to a dynamic regulation of the 20S proteasome proteolysis activity. In terms of biological role, component of the proteasome core, a large protease complex with broad specificity involved in protein degradation. The protein is Proteasome subunit beta of Actinosynnema mirum (strain ATCC 29888 / DSM 43827 / JCM 3225 / NBRC 14064 / NCIMB 13271 / NRRL B-12336 / IMRU 3971 / 101).